The following is a 117-amino-acid chain: Large ribosomal subunit protein bL20c (117 aa).

Belongs to the bacterial ribosomal protein bL20 family.

The protein resides in the plastid. It localises to the chloroplast. In terms of biological role, binds directly to 23S ribosomal RNA and is necessary for the in vitro assembly process of the 50S ribosomal subunit. It is not involved in the protein synthesizing functions of that subunit. The chain is Large ribosomal subunit protein bL20c from Platanus occidentalis (Sycamore).